The chain runs to 365 residues: Probable dual-specificity RNA methyltransferase RlmN (365 aa).

Catalysis depends on Glu108, which acts as the Proton acceptor. Residues Tyr114 to Arg352 form the Radical SAM core domain. Cys121 and Cys358 are oxidised to a cystine. Residues Cys128, Cys132, and Cys135 each contribute to the [4Fe-4S] cluster site. S-adenosyl-L-methionine is bound by residues Gly179–Glu180, Ser213, Ser236–His238, and Asn315. The active-site S-methylcysteine intermediate is the Cys358.

It belongs to the radical SAM superfamily. RlmN family. Requires [4Fe-4S] cluster as cofactor.

The protein resides in the cytoplasm. The catalysed reaction is adenosine(2503) in 23S rRNA + 2 reduced [2Fe-2S]-[ferredoxin] + 2 S-adenosyl-L-methionine = 2-methyladenosine(2503) in 23S rRNA + 5'-deoxyadenosine + L-methionine + 2 oxidized [2Fe-2S]-[ferredoxin] + S-adenosyl-L-homocysteine. It catalyses the reaction adenosine(37) in tRNA + 2 reduced [2Fe-2S]-[ferredoxin] + 2 S-adenosyl-L-methionine = 2-methyladenosine(37) in tRNA + 5'-deoxyadenosine + L-methionine + 2 oxidized [2Fe-2S]-[ferredoxin] + S-adenosyl-L-homocysteine. Its function is as follows. Specifically methylates position 2 of adenine 2503 in 23S rRNA and position 2 of adenine 37 in tRNAs. The polypeptide is Probable dual-specificity RNA methyltransferase RlmN (Mycolicibacterium gilvum (strain PYR-GCK) (Mycobacterium gilvum (strain PYR-GCK))).